We begin with the raw amino-acid sequence, 149 residues long: Down syndrome critical region protein 9 (149 aa).

Residues 1-41 are disordered; it reads MGRICPVNSRARRLRARPGRPSGDSLPYHQLQGGAPRLWSP.

The protein is Down syndrome critical region protein 9 (DSCR9) of Pan troglodytes (Chimpanzee).